We begin with the raw amino-acid sequence, 81 residues long: MQLYPANVKGLRYSECCILTANPSVQHFVMHDDAGVPLTYSVSTLHAELTDHLYLPTTRKTVAVGKKTLFVVQKKRFKPET.

This is an uncharacterized protein from Schizosaccharomyces pombe (strain 972 / ATCC 24843) (Fission yeast).